A 262-amino-acid polypeptide reads, in one-letter code: Acyl-[acyl-carrier-protein]--UDP-N-acetylglucosamine O-acyltransferase (262 aa).

Belongs to the transferase hexapeptide repeat family. LpxA subfamily. As to quaternary structure, homotrimer.

Its subcellular location is the cytoplasm. It carries out the reaction a (3R)-hydroxyacyl-[ACP] + UDP-N-acetyl-alpha-D-glucosamine = a UDP-3-O-[(3R)-3-hydroxyacyl]-N-acetyl-alpha-D-glucosamine + holo-[ACP]. It functions in the pathway glycolipid biosynthesis; lipid IV(A) biosynthesis; lipid IV(A) from (3R)-3-hydroxytetradecanoyl-[acyl-carrier-protein] and UDP-N-acetyl-alpha-D-glucosamine: step 1/6. Its function is as follows. Involved in the biosynthesis of lipid A, a phosphorylated glycolipid that anchors the lipopolysaccharide to the outer membrane of the cell. The polypeptide is Acyl-[acyl-carrier-protein]--UDP-N-acetylglucosamine O-acyltransferase (Histophilus somni (strain 2336) (Haemophilus somnus)).